Here is a 347-residue protein sequence, read N- to C-terminus: NADH-ubiquinone oxidoreductase chain 2 (347 aa).

11 helical membrane passes run 3 to 23 (PLIM…VMTG), 25 to 45 (HWLM…PMLM), 59 to 79 (YFFT…INLM), 96 to 116 (IIMT…FWVP), 127 to 147 (GLIL…MISP), 148 to 168 (GINL…GGWG), 178 to 198 (IMAY…IYNP), 201 to 221 (TLLN…LFMI), 247 to 267 (TLLS…WMII), 276 to 296 (IVLP…YMRL), and 325 to 345 (LLTP…MMMI).

This sequence belongs to the complex I subunit 2 family. As to quaternary structure, core subunit of respiratory chain NADH dehydrogenase (Complex I) which is composed of 45 different subunits. Interacts with TMEM242.

Its subcellular location is the mitochondrion inner membrane. The catalysed reaction is a ubiquinone + NADH + 5 H(+)(in) = a ubiquinol + NAD(+) + 4 H(+)(out). In terms of biological role, core subunit of the mitochondrial membrane respiratory chain NADH dehydrogenase (Complex I) which catalyzes electron transfer from NADH through the respiratory chain, using ubiquinone as an electron acceptor. Essential for the catalytic activity and assembly of complex I. The chain is NADH-ubiquinone oxidoreductase chain 2 from Ozimops beccarii (Beccari's free-tailed bat).